Here is a 314-residue protein sequence, read N- to C-terminus: Dihydropteroate synthase (314 aa).

The region spanning 10 to 294 is the Pterin-binding domain; that stretch reads TVICGIINVT…DVASHRMAVE (285 aa). Residue N17 coordinates Mg(2+). (7,8-dihydropterin-6-yl)methyl diphosphate contacts are provided by residues D91, N110, D201, K237, and 282–284; that span reads RVH.

Belongs to the DHPS family. Homodimer. Mg(2+) serves as cofactor.

It carries out the reaction (7,8-dihydropterin-6-yl)methyl diphosphate + 4-aminobenzoate = 7,8-dihydropteroate + diphosphate. Its pathway is cofactor biosynthesis; tetrahydrofolate biosynthesis; 7,8-dihydrofolate from 2-amino-4-hydroxy-6-hydroxymethyl-7,8-dihydropteridine diphosphate and 4-aminobenzoate: step 1/2. With respect to regulation, is potently inhibited by sulfonamides, with Ki values between 25 nM and 850 nM. Its function is as follows. Catalyzes the condensation of para-aminobenzoate (pABA) with 6-hydroxymethyl-7,8-dihydropterin diphosphate (DHPt-PP) to form 7,8-dihydropteroate, the immediate precursor of folate derivatives. Functionally, is the target for the sulfonamide group of antimicrobial drugs. Sulfonamide drugs act as pABA analogs, they inhibit the reaction by acting as alternative substrates, leading to a 'dead end' sulfa-pterin product. The polypeptide is Dihydropteroate synthase (sulA) (Streptococcus pneumoniae (strain ATCC BAA-255 / R6)).